Consider the following 394-residue polypeptide: Carbamoyltransferase HypF homolog (394 aa).

This sequence belongs to the carbamoyltransferase HypF family.

The protein is Carbamoyltransferase HypF homolog (hypF1) of Cupriavidus necator (strain ATCC 17699 / DSM 428 / KCTC 22496 / NCIMB 10442 / H16 / Stanier 337) (Ralstonia eutropha).